We begin with the raw amino-acid sequence, 262 residues long: Spindlin-1 (262 aa).

The interval 1–49 is disordered; it reads MKTPFGKTPGQRSRADAGHAGVSANMMKKRTSHKKHRTSVGPSKPVSQP. Residues lysine 7 and lysine 28 each participate in a glycyl lysine isopeptide (Lys-Gly) (interchain with G-Cter in SUMO2) cross-link. Over residues 27-38 the composition is skewed to basic residues; that stretch reads MKKRTSHKKHRT. Residue lysine 44 is modified to N6-acetyllysine; alternate. Lysine 44 is covalently cross-linked (Glycyl lysine isopeptide (Lys-Gly) (interchain with G-Cter in SUMO2); alternate). Residues 53–116 are tudor-like domain 1; the sequence is IVGCRIQHGW…RVSALEVLPD (64 aa). Residues 93–98 form a histone H3K4me3 and H3R8me2a binding region; it reads GFDCVY. 2 positions are modified to phosphoserine; by AURKA: serine 109 and serine 124. Residues 132 to 193 are tudor-like domain 2; that stretch reads MIGKAVEHMF…DYKEGDLRIM (62 aa). Residue glutamate 142 is a region of interest, histone H3K4me3 and H3R8me2a binding. A Phosphoserine modification is found at serine 199. Residues 213–262 are tudor-like domain 3; the sequence is LVGKQVEYAKEDGSKRTGMVIHQVEAKPSVYFIKFDDDFHIYVYDLVKTS. The segment at 250-252 is histone H3K4me3 and H3R8me2a binding; sequence DFH.

It belongs to the SPIN/STSY family. In terms of assembly, homodimer; may form higher-order oligomers. Interacts with TCF7L2/TCF4; the interaction is direct. Interacts with HABP4 and SERBP1. Interacts with SPINDOC; SPINDOC stabilizes SPIN1 and enhances its association with bivalent H3K4me3K9me3 mark. Interacts with SPOCD1; promoting recruitment of PIWIL4 and SPOCD1 to transposons. In terms of processing, phosphorylated during oocyte meiotic maturation.

It localises to the nucleus. It is found in the nucleolus. Chromatin reader that specifically recognizes and binds histone H3 both trimethylated at 'Lys-4' and 'Lys-9' (H3K4me3K9me3) and is involved in piRNA-mediated retrotransposon silencing during spermatogenesis. Plays a key role in the initiation of the PIWIL4-piRNA pathway, a pathway that directs transposon DNA methylation and silencing in the male embryonic germ cells, by promoting recruitment of DNA methylation machinery to transposons: binds young, but not old, LINE1 transposons, which are specifically marked with H3K4me3K9me3, and promotes the recruitment of PIWIL4 and SPOCD1 to transposons, leading to piRNA-directed DNA methylation. Also recognizes and binds histone H3 both trimethylated at 'Lys-4' and asymmetrically dimethylated at 'Arg-8' (H3K4me3 and H3R8me2a) and acts as an activator of Wnt signaling pathway downstream of PRMT2. Overexpression induces metaphase arrest and chromosomal instability. Overexpression induces metaphase arrest and chromosomal instability. Localizes to active rDNA loci and promotes the expression of rRNA genes. May play a role in cell-cycle regulation during the transition from gamete to embryo. Involved in oocyte meiotic resumption, a process that takes place before ovulation to resume meiosis of oocytes blocked in prophase I: may act by regulating maternal transcripts to control meiotic resumption. This Rattus norvegicus (Rat) protein is Spindlin-1 (Spin1).